The primary structure comprises 135 residues: HTH-type transcriptional regulator CueR (135 aa).

Positions 1-69 (MNISDVAKIT…LEESGELVNL (69 aa)) constitute an HTH merR-type domain. A DNA-binding region (H-T-H motif) is located at residues 4–23 (SDVAKITGLTSKAIRFYEEK). Cu(+) contacts are provided by C112 and C120.

In terms of assembly, homodimer.

It is found in the cytoplasm. Regulates the transcription of the copA and cueO genes. It detects cytoplasmic copper stress and activates transcription in response to increasing copper concentrations. The protein is HTH-type transcriptional regulator CueR (cueR) of Escherichia coli O6:H1 (strain CFT073 / ATCC 700928 / UPEC).